We begin with the raw amino-acid sequence, 57 residues long: Large ribosomal subunit protein bL32 (57 aa).

Positions 1-19 are enriched in basic residues; it reads MAVPKRRMSRANTRSRRAQ. The segment at 1 to 20 is disordered; the sequence is MAVPKRRMSRANTRSRRAQW.

The protein belongs to the bacterial ribosomal protein bL32 family.

This chain is Large ribosomal subunit protein bL32, found in Mycolicibacterium smegmatis (strain ATCC 700084 / mc(2)155) (Mycobacterium smegmatis).